Here is a 217-residue protein sequence, read N- to C-terminus: Small ribosomal subunit protein uS3 (217 aa).

Residues 40-110 (IRDLINKWFN…EVYINIHEVR (71 aa)) enclose the KH type-2 domain.

It belongs to the universal ribosomal protein uS3 family. As to quaternary structure, part of the 30S ribosomal subunit. Forms a tight complex with proteins S10 and S14.

Binds the lower part of the 30S subunit head. Binds mRNA in the 70S ribosome, positioning it for translation. The chain is Small ribosomal subunit protein uS3 from Rickettsia prowazekii (strain Madrid E).